The chain runs to 730 residues: Synaptogenesis protein syg-1 (730 aa).

An N-terminal signal peptide occupies residues 1-18 (MVRWQTWPLLLLFQLVTC). Topologically, residues 19-551 (QQLQQRIVEA…WIVITAKFDR (533 aa)) are extracellular. 5 consecutive Ig-like domains span residues 23 to 123 (QRIV…AKLT), 131 to 265 (PKIV…VKLS), 270 to 352 (PQIN…IKLN), 357 to 433 (ARIM…QILS), and 441 to 540 (PPTV…RNIL). Disulfide bonds link C44-C104, C152-C246, C292-C336, C378-C420, and C462-C519. N93 and N206 each carry an N-linked (GlcNAc...) asparagine glycan. The chain crosses the membrane as a helical span at residues 552–572 (MVALAIISAGVLLVSLLCCLC). Residues 573 to 730 (MCRSNCRSRK…RPISRTSTHV (158 aa)) are Cytoplasmic-facing.

Belongs to the immunoglobulin superfamily. In terms of assembly, interacts with skr-1. Interacts with syg-2. Interacts with the WAVE regulatory complex; the interaction leads to formation of a synaptic F-actin network that is required for synapse formation and axon branching. Expression in head motor neurons, occasionally in HSN neurons and weakly in other cells in the vulval region. Expressed in the primary synapse region of HSNL motor neuron.

The protein resides in the cell membrane. It is found in the cell projection. It localises to the axon. The protein localises to the synapse. In terms of biological role, cell adhesion protein. Involved in synapse formation in the HSNL egg-laying motor neuron. Inhibits assembly of the SCF(sel-10) E3 ubiquitin ligase complex at synapses, and protects them from elimination. Also required for F-actin assembly at the synaptic region and for axon branch formation. The sequence is that of Synaptogenesis protein syg-1 from Caenorhabditis elegans.